A 112-amino-acid polypeptide reads, in one-letter code: Nitrogen regulatory protein P-II (112 aa).

Tyr-51 is subject to O-UMP-tyrosine.

Belongs to the P(II) protein family. As to quaternary structure, homotrimer.

Its subcellular location is the plastid. It is found in the chloroplast. Functionally, P-II indirectly controls the transcription of the glutamine synthetase gene (glnA). P-II prevents NR-II-catalyzed conversion of NR-I to NR-I-phosphate, the transcriptional activator of glnA. When P-II is uridylylated to P-II-UMP, these events are reversed. When the ratio of Gln to 2-ketoglutarate decreases, P-II is uridylylated to P-II-UMP, which causes the deadenylation of glutamine synthetase, so activating the enzyme. The chain is Nitrogen regulatory protein P-II (glnB) from Pyropia yezoensis (Susabi-nori).